The chain runs to 250 residues: Tripartite motif-containing protein 73 (250 aa).

The RING-type zinc finger occupies 16–57 (CPICLEVFKESLMLQCGHSYCKGCLVSLSYHLDTKVRCPMCW). A B box-type zinc finger spans residues 84 to 125 (PEPKVCVHHRNPLSLFCEKDQELICGLCGLLGSHQHHPVTPV). Cys-89, His-92, Cys-111, and His-117 together coordinate Zn(2+). 2 coiled-coil regions span residues 125–169 (VSTV…NESD) and 204–235 (LVASLDMQLEQAQGTRERLAQAECVLEQFGNE).

This sequence belongs to the TRIM/RBCC family.

This Homo sapiens (Human) protein is Tripartite motif-containing protein 73 (TRIM73).